The chain runs to 434 residues: Serine hydroxymethyltransferase (434 aa).

Residues Leu128 and 132–134 (GHL) each bind (6S)-5,6,7,8-tetrahydrofolate. Lys237 bears the N6-(pyridoxal phosphate)lysine mark.

The protein belongs to the SHMT family. As to quaternary structure, homodimer. It depends on pyridoxal 5'-phosphate as a cofactor.

Its subcellular location is the cytoplasm. The catalysed reaction is (6R)-5,10-methylene-5,6,7,8-tetrahydrofolate + glycine + H2O = (6S)-5,6,7,8-tetrahydrofolate + L-serine. The protein operates within one-carbon metabolism; tetrahydrofolate interconversion. Its pathway is amino-acid biosynthesis; glycine biosynthesis; glycine from L-serine: step 1/1. Functionally, catalyzes the reversible interconversion of serine and glycine with tetrahydrofolate (THF) serving as the one-carbon carrier. This reaction serves as the major source of one-carbon groups required for the biosynthesis of purines, thymidylate, methionine, and other important biomolecules. Also exhibits THF-independent aldolase activity toward beta-hydroxyamino acids, producing glycine and aldehydes, via a retro-aldol mechanism. The sequence is that of Serine hydroxymethyltransferase from Corynebacterium efficiens (strain DSM 44549 / YS-314 / AJ 12310 / JCM 11189 / NBRC 100395).